The chain runs to 497 residues: MSDVVLEIKNLSKSFGKNKVLDGINLTVRQGSVMGLMGENGAGKSTMMKCLFGIYTRDEGAISLLNKSIEFKNPKEALESGVAMVHQELNLCLDRTVTDNLFLGRYPTNFGIVDEIKMFESASSLFSSLNMNVNPKTIMRTMSVSQRQMVEIAKAVSYNAKLIVLDEPTSSLTEREVKKLFSIIRALQKKGVSFIYISHKMDEVFEVCDEVAVLRDGKMILSKPVAGTNMNEIISAMVGRSLDKRFPDVDNVPGEDFLKIENLKTKYAPVLEDISFTVRKGEILGLYGLVGAGRSELLEALFGIRTIESGSISINDKYLKFKSSKEAMAHGFALLTEERKLNGMFGKDTIEFNTVITNLNNYKTIGVLSKRKIREAANREIETMRTRCLSADQGISALSGGNQQKVIIGKWLERSPDVFLMDEPTRGIDVGAKYEIYQLIIKMAKEGKTIIVVSSEMPEILGITNRIAVMSNRRLAGIVNTKETDQETLLRLSAKYL.

ABC transporter domains are found at residues 6–241 and 252–497; these read LEIK…VGRS and VPGE…AKYL. 38 to 45 serves as a coordination point for ATP; the sequence is GENGAGKS.

Belongs to the ABC transporter superfamily. Galactose/methyl galactoside importer (TC 3.A.1.2.3) family. The complex is composed of one ATP-binding protein (MglA), two transmembrane proteins (MglC) and a solute-binding protein (MglB).

It is found in the cell inner membrane. It carries out the reaction D-galactose(out) + ATP + H2O = D-galactose(in) + ADP + phosphate + H(+). The catalysed reaction is methyl beta-D-galactoside(out) + ATP + H2O = methyl beta-D-galactoside(in) + ADP + phosphate + H(+). In terms of biological role, part of the ABC transporter complex MglABC involved in galactose/methyl galactoside import. Responsible for energy coupling to the transport system. This chain is Galactose/methyl galactoside import ATP-binding protein MglA, found in Treponema denticola (strain ATCC 35405 / DSM 14222 / CIP 103919 / JCM 8153 / KCTC 15104).